The sequence spans 336 residues: Holliday junction branch migration complex subunit RuvB (336 aa).

A large ATPase domain (RuvB-L) region spans residues 4-184 (ADRLVAPGSI…FGIVQRLEFY (181 aa)). ATP is bound by residues isoleucine 23, arginine 24, glycine 65, lysine 68, threonine 69, threonine 70, 131-133 (EDY), arginine 174, tyrosine 184, and arginine 221. A Mg(2+)-binding site is contributed by threonine 69. The tract at residues 185–255 (QVADLQHIVS…VASQALDMLN (71 aa)) is small ATPAse domain (RuvB-S). Residues 258 to 336 (AEGFDYMDRK…HFGITPPQMP (79 aa)) form a head domain (RuvB-H) region. DNA contacts are provided by arginine 294, arginine 313, and arginine 318.

This sequence belongs to the RuvB family. As to quaternary structure, homohexamer. Forms an RuvA(8)-RuvB(12)-Holliday junction (HJ) complex. HJ DNA is sandwiched between 2 RuvA tetramers; dsDNA enters through RuvA and exits via RuvB. An RuvB hexamer assembles on each DNA strand where it exits the tetramer. Each RuvB hexamer is contacted by two RuvA subunits (via domain III) on 2 adjacent RuvB subunits; this complex drives branch migration. In the full resolvosome a probable DNA-RuvA(4)-RuvB(12)-RuvC(2) complex forms which resolves the HJ.

The protein resides in the cytoplasm. It catalyses the reaction ATP + H2O = ADP + phosphate + H(+). Functionally, the RuvA-RuvB-RuvC complex processes Holliday junction (HJ) DNA during genetic recombination and DNA repair, while the RuvA-RuvB complex plays an important role in the rescue of blocked DNA replication forks via replication fork reversal (RFR). RuvA specifically binds to HJ cruciform DNA, conferring on it an open structure. The RuvB hexamer acts as an ATP-dependent pump, pulling dsDNA into and through the RuvAB complex. RuvB forms 2 homohexamers on either side of HJ DNA bound by 1 or 2 RuvA tetramers; 4 subunits per hexamer contact DNA at a time. Coordinated motions by a converter formed by DNA-disengaged RuvB subunits stimulates ATP hydrolysis and nucleotide exchange. Immobilization of the converter enables RuvB to convert the ATP-contained energy into a lever motion, pulling 2 nucleotides of DNA out of the RuvA tetramer per ATP hydrolyzed, thus driving DNA branch migration. The RuvB motors rotate together with the DNA substrate, which together with the progressing nucleotide cycle form the mechanistic basis for DNA recombination by continuous HJ branch migration. Branch migration allows RuvC to scan DNA until it finds its consensus sequence, where it cleaves and resolves cruciform DNA. In Cronobacter sakazakii (strain ATCC BAA-894) (Enterobacter sakazakii), this protein is Holliday junction branch migration complex subunit RuvB.